Here is a 246-residue protein sequence, read N- to C-terminus: Uridylate kinase (246 aa).

Residue 20-23 (KISG) participates in ATP binding. The tract at residues 28–33 (GDQGYG) is involved in allosteric activation by GTP. Glycine 62 contributes to the UMP binding site. 2 residues coordinate ATP: glycine 63 and arginine 67. Residues aspartate 82 and 143-150 (TGNPYFTT) contribute to the UMP site. 3 residues coordinate ATP: threonine 170, tyrosine 176, and aspartate 179.

It belongs to the UMP kinase family. Homohexamer.

The protein resides in the cytoplasm. The enzyme catalyses UMP + ATP = UDP + ADP. The protein operates within pyrimidine metabolism; CTP biosynthesis via de novo pathway; UDP from UMP (UMPK route): step 1/1. Its activity is regulated as follows. Allosterically activated by GTP. Inhibited by UTP. Functionally, catalyzes the reversible phosphorylation of UMP to UDP. This Cereibacter sphaeroides (strain ATCC 17025 / ATH 2.4.3) (Rhodobacter sphaeroides) protein is Uridylate kinase.